The sequence spans 312 residues: Aspartoacylase (312 aa).

Zn(2+) contacts are provided by His-20 and Glu-23. 3 residues coordinate N-acetyl-L-aspartate: Arg-62, Asn-69, and Arg-70. A Zn(2+)-binding site is contributed by His-115. 2 residues coordinate N-acetyl-L-aspartate: Tyr-163 and Arg-167. Residue Glu-177 is the Proton donor/acceptor of the active site. N-acetyl-L-aspartate is bound at residue Tyr-287.

This sequence belongs to the AspA/AstE family. Aspartoacylase subfamily. Homodimer. It depends on Zn(2+) as a cofactor.

The protein resides in the cytoplasm. The protein localises to the nucleus. The catalysed reaction is an N-acyl-L-aspartate + H2O = a carboxylate + L-aspartate. It catalyses the reaction N-acetyl-L-aspartate + H2O = L-aspartate + acetate. Functionally, catalyzes the deacetylation of N-acetylaspartic acid (NAA) to produce acetate and L-aspartate. NAA occurs in high concentration in brain and its hydrolysis NAA plays a significant part in the maintenance of intact white matter. In other tissues it acts as a scavenger of NAA from body fluids. The sequence is that of Aspartoacylase from Mus musculus (Mouse).